Reading from the N-terminus, the 156-residue chain is Ribosome maturation factor RimP (156 aa).

Belongs to the RimP family.

Its subcellular location is the cytoplasm. Its function is as follows. Required for maturation of 30S ribosomal subunits. This chain is Ribosome maturation factor RimP, found in Bacillus velezensis (strain DSM 23117 / BGSC 10A6 / LMG 26770 / FZB42) (Bacillus amyloliquefaciens subsp. plantarum).